Reading from the N-terminus, the 388-residue chain is Ovalbumin-related protein Y (388 aa).

C74 and C121 are oxidised to a cystine. N-linked (GlcNAc...) asparagine glycosylation is found at N95, N215, N293, and N312.

The protein belongs to the serpin family. Ov-serpin subfamily. In terms of processing, N-glycosylated on at least two Asn residues by ovomucoid type carbohydrate units. Post-translationally, the N-terminus is blocked. In terms of tissue distribution, major protein of egg white. Expressed in the magnum of the oviduct (at protein level).

It is found in the secreted. In Gallus gallus (Chicken), this protein is Ovalbumin-related protein Y (SERPINB14B).